Reading from the N-terminus, the 60-residue chain is Large ribosomal subunit protein uL30 (60 aa).

This sequence belongs to the universal ribosomal protein uL30 family. Part of the 50S ribosomal subunit.

The sequence is that of Large ribosomal subunit protein uL30 from Burkholderia ambifaria (strain MC40-6).